Here is a 208-residue protein sequence, read N- to C-terminus: Glutathione S-transferase 2 (208 aa).

The GST N-terminal domain maps to 1 to 78; it reads MSYKLTYFSI…HLARKYNLNG (78 aa). Glutathione is bound by residues Y7, K42, 49 to 50, and 62 to 63; these read QL and QS. In terms of domain architecture, GST C-terminal spans 80–200; the sequence is NEMETTYIDM…YCEKRDAAKV (121 aa).

This sequence belongs to the GST superfamily. Pi family. In terms of assembly, homodimer. As to expression, hypodermis, wall of the seminal receptacle and spermatozoa of adult worms.

The enzyme catalyses RX + glutathione = an S-substituted glutathione + a halide anion + H(+). Its function is as follows. Appears to play a central role in the parasite detoxification system. In Onchocerca volvulus, this protein is Glutathione S-transferase 2 (GST2).